A 145-amino-acid chain; its full sequence is Large ribosomal subunit protein bL9 (145 aa).

This sequence belongs to the bacterial ribosomal protein bL9 family.

Binds to the 23S rRNA. In Ureaplasma parvum serovar 3 (strain ATCC 700970), this protein is Large ribosomal subunit protein bL9.